We begin with the raw amino-acid sequence, 404 residues long: 6-hydroxytryptophan 2,3-dioxygenase fscD (404 aa).

Position 341 (His341) interacts with heme b.

It belongs to the indoleamine 2,3-dioxygenase family. The cofactor is heme.

Its pathway is secondary metabolite biosynthesis. In terms of biological role, 6-hydroxytryptophan 2,3-dioxygenase; part of the fragmented gene cluster that mediates the biosynthesis of fusarochromene, a tryptophan-derived metabolite closely related to a group of mycotoxins including fusarochromanone. Within the pathway, fscD is responsible of the cleavage of the pyrrole ring of 6-hydroxytryptophan. The first step of the pathway is the epimerization of L-tryptophan to D-tryptophan in the presence of the NRPS-like tryptophan epimerase fscC. D-tryptophan is subsequently hydroxylated by the tryptophan 6-hydroxylase fscE to yield 6-hydroxytryptophan. The pyrrole ring undergoes cleavaged by the tryptophan 2,3-dioxygenase fscD and is finally converted to 4-hydroxykyrunenine by the hydrolase fscH. The NRPS-like oxidoreductase fscA reduces the carboxyl group to primary alcohol and the DMATS-type prenyltransferase fscG performs prenylation, followed by the formation of a chromene ring catalyzed by the oxidoreductase fscI, which leads to desacetylfusarochromene. Epoxidation by fscF and rearrangement reactions of chromene double bonds convert compound desacetylfusarochromene to fusarochromanones. Although specific acetyltransferases were not found near the fsc gene cluster, several predicted enzymes containing the N-acetyltransferase superfamily domain are present in the genome of F.equiseti. These predicted enzymes may have the potential to convert desacetylfusarochromene to fusarochromene. The protein is 6-hydroxytryptophan 2,3-dioxygenase fscD of Fusarium equiseti (Fusarium scirpi).